A 98-amino-acid polypeptide reads, in one-letter code: NADH-ubiquinone oxidoreductase chain 4L (98 aa).

Transmembrane regions (helical) follow at residues 1–21 (MSLVYMNIMTAFMVSLAGLLM), 29–49 (SLLCLEGMMLSLFVLATLTIL), and 61–81 (IILLVFGACEAALGLSLLVMV).

It belongs to the complex I subunit 4L family. In terms of assembly, core subunit of respiratory chain NADH dehydrogenase (Complex I) which is composed of 45 different subunits.

The protein localises to the mitochondrion inner membrane. The catalysed reaction is a ubiquinone + NADH + 5 H(+)(in) = a ubiquinol + NAD(+) + 4 H(+)(out). Its function is as follows. Core subunit of the mitochondrial membrane respiratory chain NADH dehydrogenase (Complex I) which catalyzes electron transfer from NADH through the respiratory chain, using ubiquinone as an electron acceptor. Part of the enzyme membrane arm which is embedded in the lipid bilayer and involved in proton translocation. This is NADH-ubiquinone oxidoreductase chain 4L (MT-ND4L) from Muntiacus vuquangensis (Giant muntjac).